The primary structure comprises 150 residues: Large ribosomal subunit protein bL9 (150 aa).

Belongs to the bacterial ribosomal protein bL9 family.

Its function is as follows. Binds to the 23S rRNA. In Corynebacterium diphtheriae (strain ATCC 700971 / NCTC 13129 / Biotype gravis), this protein is Large ribosomal subunit protein bL9.